We begin with the raw amino-acid sequence, 346 residues long: Phosphoribosylformylglycinamidine cyclo-ligase (346 aa).

It belongs to the AIR synthase family.

The protein localises to the cytoplasm. It catalyses the reaction 2-formamido-N(1)-(5-O-phospho-beta-D-ribosyl)acetamidine + ATP = 5-amino-1-(5-phospho-beta-D-ribosyl)imidazole + ADP + phosphate + H(+). The protein operates within purine metabolism; IMP biosynthesis via de novo pathway; 5-amino-1-(5-phospho-D-ribosyl)imidazole from N(2)-formyl-N(1)-(5-phospho-D-ribosyl)glycinamide: step 2/2. In Prochlorococcus marinus (strain NATL1A), this protein is Phosphoribosylformylglycinamidine cyclo-ligase.